We begin with the raw amino-acid sequence, 423 residues long: Gamma-glutamyl phosphate reductase (423 aa).

The protein belongs to the gamma-glutamyl phosphate reductase family.

It localises to the cytoplasm. It catalyses the reaction L-glutamate 5-semialdehyde + phosphate + NADP(+) = L-glutamyl 5-phosphate + NADPH + H(+). It functions in the pathway amino-acid biosynthesis; L-proline biosynthesis; L-glutamate 5-semialdehyde from L-glutamate: step 2/2. In terms of biological role, catalyzes the NADPH-dependent reduction of L-glutamate 5-phosphate into L-glutamate 5-semialdehyde and phosphate. The product spontaneously undergoes cyclization to form 1-pyrroline-5-carboxylate. The protein is Gamma-glutamyl phosphate reductase of Burkholderia ambifaria (strain ATCC BAA-244 / DSM 16087 / CCUG 44356 / LMG 19182 / AMMD) (Burkholderia cepacia (strain AMMD)).